We begin with the raw amino-acid sequence, 457 residues long: Flavohemoprotein-1 (457 aa).

A Globin domain is found at 2 to 157; that stretch reads ALSEDTIKAV…LADLLIKREE (156 aa). His106 contacts heme b. Residues Tyr116 and Glu156 each act as charge relay system in the active site. The reductase stretch occupies residues 168–456; that stretch reads GGWRQTRTFR…FEMFGPFKAS (289 aa). Residues 171 to 278 enclose the FAD-binding FR-type domain; that stretch reads RQTRTFRVEE…APPYGDFFLR (108 aa). Residues Tyr210 and 227–230 contribute to the FAD site; that span reads RQYS. 320–325 is an NADP(+) binding site; it reads GIGQTP. 449–452 provides a ligand contact to FAD; it reads MFGP.

It belongs to the globin family. Two-domain flavohemoproteins subfamily. The protein in the C-terminal section; belongs to the flavoprotein pyridine nucleotide cytochrome reductase family. Monomer. The cofactor is heme b. FAD is required as a cofactor.

It carries out the reaction 2 nitric oxide + NADPH + 2 O2 = 2 nitrate + NADP(+) + H(+). The catalysed reaction is 2 nitric oxide + NADH + 2 O2 = 2 nitrate + NAD(+) + H(+). In terms of biological role, flavohemoprotein involved in nitric oxide (NO) detoxification in an aerobic process, termed nitric oxide dioxygenase (NOD) reaction that utilizes O(2) and NAD(P)H to convert NO to nitrate, which protects the protozoan parasite from various noxious nitrogen compounds. Therefore, plays a central role in the inducible response to nitrosative stress. May also be involved in O(2) detoxification. The polypeptide is Flavohemoprotein-1 (hmpA-1) (Giardia intestinalis (strain P15) (Giardia lamblia)).